A 445-amino-acid polypeptide reads, in one-letter code: Phosphoglucosamine mutase (445 aa).

The Phosphoserine intermediate role is filled by Ser-102. Ser-102, Asp-240, Asp-242, and Asp-244 together coordinate Mg(2+). Ser-102 bears the Phosphoserine mark.

It belongs to the phosphohexose mutase family. Requires Mg(2+) as cofactor. Post-translationally, activated by phosphorylation.

The enzyme catalyses alpha-D-glucosamine 1-phosphate = D-glucosamine 6-phosphate. In terms of biological role, catalyzes the conversion of glucosamine-6-phosphate to glucosamine-1-phosphate. This chain is Phosphoglucosamine mutase, found in Mycobacterium ulcerans (strain Agy99).